Here is a 460-residue protein sequence, read N- to C-terminus: Asparagine--tRNA ligase (460 aa).

This sequence belongs to the class-II aminoacyl-tRNA synthetase family. Homodimer.

Its subcellular location is the cytoplasm. It catalyses the reaction tRNA(Asn) + L-asparagine + ATP = L-asparaginyl-tRNA(Asn) + AMP + diphosphate + H(+). This chain is Asparagine--tRNA ligase, found in Picosynechococcus sp. (strain ATCC 27264 / PCC 7002 / PR-6) (Agmenellum quadruplicatum).